We begin with the raw amino-acid sequence, 204 residues long: GATA transcription factor 14 (204 aa).

Over residues 57–66 (REFDTNDSKP) the composition is skewed to basic and acidic residues. The interval 57 to 102 (REFDTNDSKPSRNFSNLPTATRGRLHAPKRSGNKRGRQKRLSFKSP) is disordered. Over residues 79–98 (GRLHAPKRSGNKRGRQKRLS) the composition is skewed to basic residues. The GATA-type zinc-finger motif lies at 111–165 (GITDKSCSHCGTRKTPLWREGPRGAGTLCNACGMRYRTGRLLPEYRPASSPDFKP). Residues 180–204 (RERKSSPPNSFGFSESYHSTRKLGF) are disordered. Residues 185–196 (SPPNSFGFSESY) show a composition bias toward polar residues.

This sequence belongs to the type IV zinc-finger family. Class A subfamily.

The protein resides in the nucleus. Its function is as follows. Transcriptional activator that specifically binds 5'-GATA-3' or 5'-GAT-3' motifs within gene promoters. May be involved in the regulation of some light-responsive genes. The polypeptide is GATA transcription factor 14 (GATA14) (Arabidopsis thaliana (Mouse-ear cress)).